The chain runs to 579 residues: DELLA protein RGA2 (579 aa).

A disordered region spans residues Met1–Lys31. The DELLA motif signature appears at Asp45–Ala49. Composition is skewed to low complexity over residues Ser149–Ser162 and Ser174–Thr183. The tract at residues Ser149 to Thr183 is disordered. Residues Val205–Lys574 form the GRAS domain. The leucine repeat I (LRI) stretch occupies residues Val212–Ile266. The segment at Gln285–Gly350 is VHIID. Positions Val316–Asp320 match the VHIID motif. The interval Glu364–Ser396 is leucine repeat II (LRII). The tract at residues Val408 to Asn495 is PFYRE. The LXXLL motif signature appears at Leu416–Leu420. An SAW region spans residues Ala498 to Lys574.

It belongs to the GRAS family. DELLA subfamily. Phosphorylated. Post-translationally, ubiquitinated. Upon GA application it is ubiquitinated, leading to its subsequent degradation.

It localises to the nucleus. Probable transcriptional regulator that acts as a repressor of the gibberellin (GA) signaling pathway. Probably acts by participating in large multiprotein complexes that represses transcription of GA-inducible genes. Upon GA application, it is degraded by the proteasome, allowing the GA signaling pathway. This is DELLA protein RGA2 (RGA2) from Brassica campestris (Field mustard).